Reading from the N-terminus, the 687-residue chain is Adhesion G-protein coupled receptor G1 (687 aa).

The N-terminal stretch at 1-25 (MTAQSLLQTTLFLLSLLFLVQGAHG) is a signal peptide. Heparin is bound at residue 26-33 (RGHREDFR). The Extracellular portion of the chain corresponds to 26–402 (RGHREDFRFC…VEVDAVHKHY (377 aa)). Cystine bridges form between cysteine 35–cysteine 91 and cysteine 121–cysteine 177. 4 N-linked (GlcNAc...) asparagine glycosylation sites follow: asparagine 39, asparagine 148, asparagine 156, and asparagine 171. Residue 190 to 200 (LKHPQKASRRP) coordinates heparin. Positions 224–395 (DTVSFEEDRV…AVLMVSSVEV (172 aa)) constitute a GAIN-B domain. Asparagine 234, asparagine 303, asparagine 324, and asparagine 341 each carry an N-linked (GlcNAc...) asparagine glycan. 2 cysteine pairs are disulfide-bonded: cysteine 346-cysteine 377 and cysteine 366-cysteine 379. Positions 346-395 (CVFWVEDPTLSNPGRWSSAGCETVRRETQTSCFCNHLTYFAVLMVSSVEV) are GPS. Positions 384–397 (YFAVLMVSSVEVDA) are stachel. Residues 403–423 (LSLLSYVGCVVSALACVVTIA) form a helical membrane-spanning segment. Over 424–442 (AYLCSRRKPRDYTIKVHMN) the chain is Cytoplasmic. Residues 443–463 (LLLAVFLLDVSFLLSEPVALT) form a helical membrane-spanning segment. The Extracellular segment spans residues 464–470 (GSQSGCR). Residues 471–491 (ASAIFLHFSLLACLSWMGLEG) traverse the membrane as a helical segment. Topologically, residues 492-512 (YNLYRLVVEVFGTYIPGYLLK) are cytoplasmic. The helical transmembrane segment at 513–533 (LSAMGWGFPIFLVTLVALVDV) threads the bilayer. Residues 534–570 (DNYGPIILAVHRTPESVIYPSMCWIRDSLVSYITNLG) are Extracellular-facing. A helical membrane pass occupies residues 571–591 (LFSLVFLFNMAMLGTMVVQIL). The Cytoplasmic portion of the chain corresponds to 592 to 603 (RLRPHTQKWSHV). The helical transmembrane segment at 604–624 (LTLLGLSLVLGLPWALIFFSF) threads the bilayer. Over 625-630 (ASGTFQ) the chain is Extracellular. The chain crosses the membrane as a helical span at residues 631-651 (LVVLYLFSIITSFQGFLIFLW). Over 652–687 (YWSMRLQARGGPSPLKSNSDSARLPISTGSTSSSRI) the chain is Cytoplasmic. Residues 664-687 (SPLKSNSDSARLPISTGSTSSSRI) form a disordered region. Positions 666 to 687 (LKSNSDSARLPISTGSTSSSRI) are enriched in polar residues.

It belongs to the G-protein coupled receptor 2 family. LN-TM7 subfamily. Heterodimer of 2 chains generated by proteolytic processing; the large extracellular N-terminal fragment (ADGRG1 NT) and the membrane-bound C-terminal fragment (ADGRG1-CT) predominantly remain associated and non-covalently linked. ADGRG1 NT self-associates in a trans-trans manner; the homophilic interaction enhances receptor signaling. Interacts with TGM2. Interacts with heparin; leading to the reduction of ADGRG1 shedding. Interacts with COL3A1. Part of a GPCR-tetraspanin complex at least consisting of ADGRG1, CD81, eventually CD9, and GNA11 in which CD81 is enhancing the association of ADGRG1 with GNA11. Autoproteolytically cleaved into 2 fragments; the large extracellular N-terminal fragment (ADGRG1 NT) and the membrane-bound C-terminal fragment (ADGRG1 CT) predominantly remain associated and non-covalently linked. Shedding to yield the secreted ADGRG1 N-terminal fragment seems to involve metalloprotease(s). Post-translationally, ubiquitinated. Undergoes polyubiquitination upon activation.

It is found in the cell membrane. The protein resides in the secreted. The protein localises to the membrane raft. With respect to regulation, forms a heterodimer of 2 chains generated by proteolytic processing that remain associated through non-covalent interactions mediated by the GAIN-B domain. In the inactivated receptor, the Stachel sequence (also named stalk) is embedded in the GAIN-B domain, where it adopts a beta-strand conformation. On activation, the Stachel moves into the 7 transmembrane region and adopts a twisted hook-shaped configuration that forms contacts within the receptor, leading to coupling of a G-alpha protein, which activates signaling. The cleaved GAIN-B and N-terminal domains can then dissociate from the rest of the receptor. Functionally, adhesion G-protein coupled receptor (aGPCR) for steroid hormone 17alpha-hydroxypregnenolone (17-OH), which is involved in cell adhesion and cell-cell interactions. Ligand binding causes a conformation change that triggers signaling via guanine nucleotide-binding proteins (G proteins) and modulates the activity of downstream effectors, such as RhoA pathway. ADGRG1 is coupled to G(12) and/or G(13) G proteins (GNA12 and GNA13, respectively) and mediates the activation Rho small GTPases. Acts as a potent suppressor of ferroptosis: binding to 17-OH-binding initiates signaling that down-regulates CD36 and alleviates ferroptosis-induced liver injury. Ligand-binding also induces cell adhesion activity via association with proteins such as collagen III/COL3A1 and TGM2. Mediates cell matrix adhesion in developing neurons and hematopoietic stem cells. Involved in cortical development, specifically in maintenance of the pial basement membrane integrity and in cortical lamination: association with COL3A1 in the developing brain inhibits neuronal migration via activation of the RhoA pathway. Together with TGM2, acts as a regulator of myelination and myelin repair in oligodendrocyte precursor cells. Acts as a hemostatic sensor of shear force: G protein-coupled receptor signaling is activated in response to shear force in platelets, promoting G(13) G protein signaling, and platelet shape change and aggregation in a COL3A1-dependent manner. Acts as an inhibitor of VEGFA production thereby inhibiting angiogenesis through a signaling pathway mediated by PRKCA. Plays a role in the maintenance of hematopoietic stem cells in bone marrow niche. Plays an essential role in testis development. The chain is Adhesion G-protein coupled receptor G1 (ADGRG1) from Macaca mulatta (Rhesus macaque).